The following is a 1036-amino-acid chain: Lethal(2) giant larvae protein homolog 1 (1036 aa).

WD repeat units lie at residues 38 to 71, 78 to 119, 139 to 175, 199 to 233, 239 to 271, 289 to 331, 339 to 373, 395 to 473, 517 to 592, and 601 to 662; these read SALAFDPELRIMAIGTRSGAVKIYGAPGVEFTGL, VTQM…GLSF, VTVVLLAAGDTVVLGTESGSIFFLDVATLALLEGQTL, SLQGHLQDPSKILIGYSRGLLVIWSQATQSVEHVF, LESLCWGRGGSNIISSHSDGSYAIWSTDTGSPP, AINK…ETLV, VIDFFTVHSTQPEDECDNPQALAVLLEEELVVLDL, TCSA…YKLS, QKVA…RMLI, and TAVT…LRQS. S662 bears the Phosphoserine mark. Residues 667 to 677 show a composition bias toward basic residues; sequence RKSRVSGKKRT. Residues 667-688 form a disordered region; it reads RKSRVSGKKRTPAASSKLQEAN. Positions 679–688 are enriched in polar residues; it reads AASSKLQEAN. WD repeat units lie at residues 722–782, 791–843, 848–901, and 915–938; these read VRCL…KEVQ, AIAV…VSAK, LTAH…VHYS, and VFTRHGQGFYLISPSEFERFSLSA. T957 is modified (phosphothreonine). 3 positions are modified to phosphoserine: S964, S982, and S989. The interval 980-1002 is disordered; the sequence is PESCEGSPSSAHSKRADTMEPPE.

Belongs to the WD repeat L(2)GL family. In terms of assembly, associated with nonmuscle myosin II heavy chain. Interacts with PRKCI/aPKC, PARD6B/Par-6 and PARD6A. Interacts with STX4A. Interacts with RAB10 (GDP-bound form); the interaction is direct and promotes RAB10 association with membranes and activation through competition with the Rab inhibitor GDI1. Interacts with DCAF1. Phosphorylated by PRKCI. Widely expressed. Expressed in brain, ovary, testis, with moderate expression in lever, uterus, lung and kidney.

Its subcellular location is the early endosome membrane. The protein resides in the golgi apparatus. It is found in the trans-Golgi network membrane. It localises to the cell projection. The protein localises to the axon. Its subcellular location is the golgi apparatus membrane. The protein resides in the cytoplasm. It is found in the cytoskeleton. In terms of biological role, cortical cytoskeleton protein found in a complex involved in maintaining cell polarity and epithelial integrity. Involved in the regulation of mitotic spindle orientation, proliferation, differentiation and tissue organization of neuroepithelial cells. Involved in axonogenesis through RAB10 activation thereby regulating vesicular membrane trafficking toward the axonal plasma membrane. The chain is Lethal(2) giant larvae protein homolog 1 (LLGL1) from Bos taurus (Bovine).